Here is a 503-residue protein sequence, read N- to C-terminus: Probable cytosol aminopeptidase (503 aa).

Residues lysine 268 and aspartate 273 each coordinate Mn(2+). The active site involves lysine 280. Residues aspartate 291, aspartate 350, and glutamate 352 each coordinate Mn(2+). The active site involves arginine 354.

The protein belongs to the peptidase M17 family. Mn(2+) is required as a cofactor.

Its subcellular location is the cytoplasm. The catalysed reaction is Release of an N-terminal amino acid, Xaa-|-Yaa-, in which Xaa is preferably Leu, but may be other amino acids including Pro although not Arg or Lys, and Yaa may be Pro. Amino acid amides and methyl esters are also readily hydrolyzed, but rates on arylamides are exceedingly low.. The enzyme catalyses Release of an N-terminal amino acid, preferentially leucine, but not glutamic or aspartic acids.. Functionally, presumably involved in the processing and regular turnover of intracellular proteins. Catalyzes the removal of unsubstituted N-terminal amino acids from various peptides. The protein is Probable cytosol aminopeptidase of Herminiimonas arsenicoxydans.